The sequence spans 248 residues: ATP synthase subunit a, chloroplastic (248 aa).

The next 5 helical transmembrane spans lie at 37–57, 96–116, 134–154, 200–220, and 221–241; these read AQVL…AILA, VPFI…GALL, DINT…YAGL, LVVA…MMFL, and GLFT…AYIG.

It belongs to the ATPase A chain family. As to quaternary structure, F-type ATPases have 2 components, CF(1) - the catalytic core - and CF(0) - the membrane proton channel. CF(1) has five subunits: alpha(3), beta(3), gamma(1), delta(1), epsilon(1). CF(0) has four main subunits: a, b, b' and c.

It localises to the plastid. Its subcellular location is the chloroplast thylakoid membrane. Its function is as follows. Key component of the proton channel; it plays a direct role in the translocation of protons across the membrane. The polypeptide is ATP synthase subunit a, chloroplastic (Anthoceros angustus (Hornwort)).